A 226-amino-acid polypeptide reads, in one-letter code: Late protein I226R (226 aa).

Residues 1–16 form the signal peptide; that stretch reads MKMETFLVCLFHNAAG. Asn-164 carries an N-linked (GlcNAc...) asparagine; by host glycan.

This sequence belongs to the asfivirus I226R family.

In terms of biological role, plays a role in the inhibition of host NF-kappa-B and IRF3 signaling pathways. Mechanistically, promotes the degradation of host IKBKG through enhancing its ubiquitination leading to inhibition of both pathways. The chain is Late protein I226R from African swine fever virus (isolate Pig/Kenya/KEN-50/1950) (ASFV).